The chain runs to 210 residues: RNA chaperone ProQ (210 aa).

Over residues 98-127 the composition is skewed to basic and acidic residues; it reads HAKASLEESKAKVAARRKEQAKKAREEAKA. The interval 98 to 155 is disordered; that stretch reads HAKASLEESKAKVAARRKEQAKKAREEAKAKKPARATTPPKRRPQPAAVAKKQEKPVE.

It belongs to the ProQ family.

It is found in the cytoplasm. Its function is as follows. RNA chaperone with significant RNA binding, RNA strand exchange and RNA duplexing activities. The polypeptide is RNA chaperone ProQ (Aliivibrio salmonicida (strain LFI1238) (Vibrio salmonicida (strain LFI1238))).